A 195-amino-acid polypeptide reads, in one-letter code: PABIR family member 1 (195 aa).

It belongs to the FAM122 family.

The polypeptide is PABIR family member 1 (Homo sapiens (Human)).